The following is a 103-amino-acid chain: Small ribosomal subunit protein eS25 (103 aa).

Residues 1–23 (MGGEDMAKKKAPSAKEGEKQQGF) form a disordered region.

It belongs to the eukaryotic ribosomal protein eS25 family.

The polypeptide is Small ribosomal subunit protein eS25 (rps25e) (Aeropyrum pernix (strain ATCC 700893 / DSM 11879 / JCM 9820 / NBRC 100138 / K1)).